Reading from the N-terminus, the 148-residue chain is Large ribosomal subunit protein bL9 (148 aa).

It belongs to the bacterial ribosomal protein bL9 family.

Its function is as follows. Binds to the 23S rRNA. This Leptospira biflexa serovar Patoc (strain Patoc 1 / Ames) protein is Large ribosomal subunit protein bL9.